Here is a 347-residue protein sequence, read N- to C-terminus: Phosphoribosylformylglycinamidine cyclo-ligase (347 aa).

This sequence belongs to the AIR synthase family.

It is found in the cytoplasm. It carries out the reaction 2-formamido-N(1)-(5-O-phospho-beta-D-ribosyl)acetamidine + ATP = 5-amino-1-(5-phospho-beta-D-ribosyl)imidazole + ADP + phosphate + H(+). It participates in purine metabolism; IMP biosynthesis via de novo pathway; 5-amino-1-(5-phospho-D-ribosyl)imidazole from N(2)-formyl-N(1)-(5-phospho-D-ribosyl)glycinamide: step 2/2. In Prochlorococcus marinus subsp. pastoris (strain CCMP1986 / NIES-2087 / MED4), this protein is Phosphoribosylformylglycinamidine cyclo-ligase.